The sequence spans 354 residues: Uroporphyrinogen decarboxylase (354 aa).

Substrate is bound by residues 27 to 31, F46, D77, Y153, T208, and H326; that span reads RQAGR.

It belongs to the uroporphyrinogen decarboxylase family. Homodimer.

Its subcellular location is the cytoplasm. It carries out the reaction uroporphyrinogen III + 4 H(+) = coproporphyrinogen III + 4 CO2. It participates in porphyrin-containing compound metabolism; protoporphyrin-IX biosynthesis; coproporphyrinogen-III from 5-aminolevulinate: step 4/4. In terms of biological role, catalyzes the decarboxylation of four acetate groups of uroporphyrinogen-III to yield coproporphyrinogen-III. The chain is Uroporphyrinogen decarboxylase from Neisseria meningitidis serogroup B (strain ATCC BAA-335 / MC58).